The following is a 152-amino-acid chain: Xanthine-guanine phosphoribosyltransferase (152 aa).

Residues 37 to 38 (RG), Arg69, and 88 to 96 (DDLVDSGDT) each bind 5-phospho-alpha-D-ribose 1-diphosphate. Arg69 contacts GMP. Asp89 is a binding site for Mg(2+). Residues Asp92 and Ile135 each contribute to the guanine site. Residues Asp92 and Ile135 each coordinate xanthine. GMP is bound by residues 92 to 96 (DSGDT) and 134 to 135 (WI).

This sequence belongs to the purine/pyrimidine phosphoribosyltransferase family. XGPT subfamily. As to quaternary structure, homotetramer. Mg(2+) serves as cofactor.

It is found in the cell inner membrane. The catalysed reaction is GMP + diphosphate = guanine + 5-phospho-alpha-D-ribose 1-diphosphate. It carries out the reaction XMP + diphosphate = xanthine + 5-phospho-alpha-D-ribose 1-diphosphate. It catalyses the reaction IMP + diphosphate = hypoxanthine + 5-phospho-alpha-D-ribose 1-diphosphate. Its pathway is purine metabolism; GMP biosynthesis via salvage pathway; GMP from guanine: step 1/1. It functions in the pathway purine metabolism; XMP biosynthesis via salvage pathway; XMP from xanthine: step 1/1. Purine salvage pathway enzyme that catalyzes the transfer of the ribosyl-5-phosphate group from 5-phospho-alpha-D-ribose 1-diphosphate (PRPP) to the N9 position of the 6-oxopurines guanine and xanthine to form the corresponding ribonucleotides GMP (guanosine 5'-monophosphate) and XMP (xanthosine 5'-monophosphate), with the release of PPi. To a lesser extent, also acts on hypoxanthine. This chain is Xanthine-guanine phosphoribosyltransferase, found in Aliivibrio fischeri (strain ATCC 700601 / ES114) (Vibrio fischeri).